The primary structure comprises 448 residues: Gamete and mating-type specific protein A (448 aa).

A signal peptide spans 1–19 (MKLILVLLCLISTLFVVKG). An SCP domain is found at 30–157 (VSYHNKWRSS…PDKSEVSCSY (128 aa)). N-linked (GlcNAc...) asparagine glycosylation is found at asparagine 55, asparagine 98, and asparagine 119. The segment at 171–242 (PKTTTPAPTT…PTTPAPTSTL (72 aa)) is disordered. Pro residues predominate over residues 178–236 (PTTPAPTTPKPTTPAPTTPKPTTPAPTTPKPTTPAPTTPKPTTPAPTTPKPTTPAPTTP). Active-site residues include cysteine 262, histidine 397, and asparagine 415.

It belongs to the peptidase C1 family.

The protein resides in the secreted. In terms of biological role, thiol protease that seems to be involved in the sexual development. In Dictyostelium discoideum (Social amoeba), this protein is Gamete and mating-type specific protein A (gmsA).